The sequence spans 354 residues: Uroporphyrinogen decarboxylase (354 aa).

Substrate-binding positions include 27–31, aspartate 77, tyrosine 154, threonine 209, and histidine 327; that span reads RQAGR.

The protein belongs to the uroporphyrinogen decarboxylase family. In terms of assembly, homodimer.

Its subcellular location is the cytoplasm. The catalysed reaction is uroporphyrinogen III + 4 H(+) = coproporphyrinogen III + 4 CO2. Its pathway is porphyrin-containing compound metabolism; protoporphyrin-IX biosynthesis; coproporphyrinogen-III from 5-aminolevulinate: step 4/4. In terms of biological role, catalyzes the decarboxylation of four acetate groups of uroporphyrinogen-III to yield coproporphyrinogen-III. This is Uroporphyrinogen decarboxylase from Histophilus somni (strain 129Pt) (Haemophilus somnus).